Consider the following 412-residue polypeptide: Glucose-1-phosphate adenylyltransferase (412 aa).

Alpha-D-glucose 1-phosphate contacts are provided by residues Tyr-98, Gly-163, 178-179 (EK), and Ser-189.

The protein belongs to the bacterial/plant glucose-1-phosphate adenylyltransferase family. In terms of assembly, homotetramer.

The enzyme catalyses alpha-D-glucose 1-phosphate + ATP + H(+) = ADP-alpha-D-glucose + diphosphate. It participates in glycan biosynthesis; glycogen biosynthesis. In terms of biological role, involved in the biosynthesis of ADP-glucose, a building block required for the elongation reactions to produce glycogen. Catalyzes the reaction between ATP and alpha-D-glucose 1-phosphate (G1P) to produce pyrophosphate and ADP-Glc. In Thermosipho africanus (strain TCF52B), this protein is Glucose-1-phosphate adenylyltransferase.